We begin with the raw amino-acid sequence, 275 residues long: Large ribosomal subunit protein uL2 (275 aa).

The interval 223–275 (VAMNPVDHPHGGGEGRTGEGRVPVSPWGTPAKGYRTRNNKRTDNMIVRRRHSK) is disordered. Residues 229 to 241 (DHPHGGGEGRTGE) show a composition bias toward basic and acidic residues.

This sequence belongs to the universal ribosomal protein uL2 family. As to quaternary structure, part of the 50S ribosomal subunit. Forms a bridge to the 30S subunit in the 70S ribosome.

In terms of biological role, one of the primary rRNA binding proteins. Required for association of the 30S and 50S subunits to form the 70S ribosome, for tRNA binding and peptide bond formation. It has been suggested to have peptidyltransferase activity; this is somewhat controversial. Makes several contacts with the 16S rRNA in the 70S ribosome. This chain is Large ribosomal subunit protein uL2, found in Laribacter hongkongensis (strain HLHK9).